The sequence spans 104 residues: Large ribosomal subunit protein uL24 (104 aa).

The protein belongs to the universal ribosomal protein uL24 family. As to quaternary structure, part of the 50S ribosomal subunit.

In terms of biological role, one of two assembly initiator proteins, it binds directly to the 5'-end of the 23S rRNA, where it nucleates assembly of the 50S subunit. One of the proteins that surrounds the polypeptide exit tunnel on the outside of the subunit. In Shewanella baltica (strain OS223), this protein is Large ribosomal subunit protein uL24.